The sequence spans 378 residues: Probable tRNA sulfurtransferase (378 aa).

The 103-residue stretch at 51 to 153 folds into the THUMP domain; the sequence is DANLEKLQYV…SDKTYLFSKT (103 aa). ATP is bound by residues 171–172, 196–197, arginine 253, glycine 275, and glutamine 284; these read LM and SF.

This sequence belongs to the ThiI family.

Its subcellular location is the cytoplasm. It catalyses the reaction [ThiI sulfur-carrier protein]-S-sulfanyl-L-cysteine + a uridine in tRNA + 2 reduced [2Fe-2S]-[ferredoxin] + ATP + H(+) = [ThiI sulfur-carrier protein]-L-cysteine + a 4-thiouridine in tRNA + 2 oxidized [2Fe-2S]-[ferredoxin] + AMP + diphosphate. It carries out the reaction [ThiS sulfur-carrier protein]-C-terminal Gly-Gly-AMP + S-sulfanyl-L-cysteinyl-[cysteine desulfurase] + AH2 = [ThiS sulfur-carrier protein]-C-terminal-Gly-aminoethanethioate + L-cysteinyl-[cysteine desulfurase] + A + AMP + 2 H(+). Its pathway is cofactor biosynthesis; thiamine diphosphate biosynthesis. In terms of biological role, catalyzes the ATP-dependent transfer of a sulfur to tRNA to produce 4-thiouridine in position 8 of tRNAs, which functions as a near-UV photosensor. Also catalyzes the transfer of sulfur to the sulfur carrier protein ThiS, forming ThiS-thiocarboxylate. This is a step in the synthesis of thiazole, in the thiamine biosynthesis pathway. The sulfur is donated as persulfide by IscS. This Mycoplasmopsis agalactiae (strain NCTC 10123 / CIP 59.7 / PG2) (Mycoplasma agalactiae) protein is Probable tRNA sulfurtransferase.